A 74-amino-acid polypeptide reads, in one-letter code: DNA gyrase inhibitor YacG (74 aa).

Zn(2+) contacts are provided by Cys-7, Cys-10, Cys-26, and Cys-30.

It belongs to the DNA gyrase inhibitor YacG family. As to quaternary structure, interacts with GyrB. It depends on Zn(2+) as a cofactor.

In terms of biological role, inhibits all the catalytic activities of DNA gyrase by preventing its interaction with DNA. Acts by binding directly to the C-terminal domain of GyrB, which probably disrupts DNA binding by the gyrase. This chain is DNA gyrase inhibitor YacG, found in Shewanella denitrificans (strain OS217 / ATCC BAA-1090 / DSM 15013).